Reading from the N-terminus, the 364-residue chain is Probable endopolygalacturonase B (364 aa).

The signal sequence occupies residues 1 to 20; the sequence is MHFFQSSLVAATMGAALVAA. The propeptide occupies 21–29; that stretch reads APAADLETR. Cysteine 32 and cysteine 47 are oxidised to a cystine. Residues asparagine 138 and asparagine 141 are each glycosylated (N-linked (GlcNAc...) asparagine). PbH1 repeat units follow at residues 159 to 188, 189 to 210, 211 to 231, 240 to 261, 269 to 291, and 303 to 324; these read SDHLTIKDVLLDNSAGTKLGHNTDAFDVGS, STYITIDGATVYNQDDCLAVNS, GEHITFTNGYCNGGHGLSIGS, VNDVTISNSQVINSQNGARIKT, VTGVKFQDISLKGITKYGIVVQQ, and TNGVKVSDITFEKVTGTVTSSA. Residue aspartate 203 is the Proton donor of the active site. A disulfide bridge connects residues cysteine 205 and cysteine 221. The active site involves histidine 225. Cysteine 331 and cysteine 336 form a disulfide bridge. Residue asparagine 338 is glycosylated (N-linked (GlcNAc...) asparagine). Cysteine 355 and cysteine 364 form a disulfide bridge.

The protein belongs to the glycosyl hydrolase 28 family.

The protein resides in the secreted. The enzyme catalyses (1,4-alpha-D-galacturonosyl)n+m + H2O = (1,4-alpha-D-galacturonosyl)n + (1,4-alpha-D-galacturonosyl)m.. Involved in maceration and soft-rotting of plant tissue. Hydrolyzes the 1,4-alpha glycosidic bonds of de-esterified pectate in the smooth region of the plant cell wall. The sequence is that of Probable endopolygalacturonase B (pgaB) from Aspergillus fumigatus (strain ATCC MYA-4609 / CBS 101355 / FGSC A1100 / Af293) (Neosartorya fumigata).